We begin with the raw amino-acid sequence, 284 residues long: Efem/EfeO family lipoprotein (284 aa).

Residues 1–17 (MKKLTTLLLASTLLIAA) form the signal peptide. A lipid anchor (N-palmitoyl cysteine) is attached at Cys-18. Residue Cys-18 is the site of S-diacylglycerol cysteine attachment.

This sequence belongs to the EfeM/EfeO family.

It is found in the cell membrane. This chain is Efem/EfeO family lipoprotein, found in Staphylococcus aureus (strain NCTC 8325 / PS 47).